A 1304-amino-acid polypeptide reads, in one-letter code: MSEKGRFSAGLSRQAADGNKADAPLPPVPFRNYQIGKKELRNLIAWSFARYGTARTAQMADALKTLGFKYATQAAVSISVEDLRVPPSKRQLLAQAEAEIEAATERYTRGEITEVERYQKVIDTWNQINDQIKEEMLNNFRQNDPLNSVYMMANSGARGNVSQVRQLVGMRGLMANPQGRIIDLPIKTNFREGLTVTEYIISSYGARKGLVDTALRTADSGYLTRRLVDVSQDVIVRESDCGTEQGILLEYLMDGDKVVVSLEERLVGRVLARDVVHPQTQEILARRNQEVDHDLARTIAEAGIRQVMVRSPLTCEANRSVCRMCYGWSLAHSRLVDLGEAVGIIAAQSIGEPGTQLTMRTFHTGGVFTGEVARQIRAPFAGVVRFPKNLRTRPFRTRHGDDALQVEVNNQIILEGPDGQRESFDMTQGSTLLVRDGAQVQRDQLIAEVSLAKASRKSTEKAQKEVVADLAGEIRFADLPIEEKTDRQGNTTYTAQRQGLIWVMSGQVYNLPPGAEPVVKNGDRVQAGDVIAETSLVTEHGGIVRLPERSDTRSGREVEIINASVVLREARVRVESHQGREQFLLDTSSGQTFVLKATPGTKVGNDEVVAELIDNHFRSQTGGLVKFAGIEVARRGKAKQGYEVIQGGTLLWIPEETHEVNKDISLLNVDDGQYVEAGTEVVKDIFCQNAGVVEVIQKNDILREIVIKPGSLHLVDNPADLEVKSGTLIQPGQPVLSSIVPDRLVYLEHVETPEGPGLLLRPVQEYEIPDRPLVPTQESTSESGRSIRLRAVQRVPFKDGERVKSVGPVELLRTQLVLEIDTDAPQLKADIELIQDEKDPDIRRLQLVILETLLLRRDVEADLTQGSTHTRLLVKEGDSIASGDVIARTEIQAKKAGIVQGIREGAEVVRRVLVITDDDLVQVPLTGPANVEVGALVRVGDELAPGIPSPQSGQVMQITDGQVLLRMARPYLVSAGAILQVRNGDLVQRGDSLALLVFERAKTGDIIQGLPRIEELLEARKPKEMCVLAKRPGTVQLSWRGEEPDLKVIEADGTVRDYSVLPGQSLIVVDGQPVGVGDPLTDGPANPHDLLEIYYEYHRQTLGDDQAARLALREVQRFFVNEVQNVYRSQGVEISDKHIEIVVRQMTSKVRVDDGGDTILLPGELVELREIQQINATMAITGGAPAKYTPVLLGITKASLNTDSFISAASFQETTRVLTEAAIEGKSDWLRGLKENVIIGRLIPAGTGFTTYEEIAAEPEPDEEEEEPAVLPELPPRLILEDDQLIDDSTPAFDELEEDDDEEE.

Residues 1 to 23 form a disordered region; that stretch reads MSEKGRFSAGLSRQAADGNKADA. Residues C241, C315, C322, and C325 each contribute to the Zn(2+) site. Residues 1256–1268 are compositionally biased toward acidic residues; the sequence is AAEPEPDEEEEEP. Residues 1256-1304 are disordered; it reads AAEPEPDEEEEEPAVLPELPPRLILEDDQLIDDSTPAFDELEEDDDEEE. A compositionally biased stretch (low complexity) spans 1269-1278; that stretch reads AVLPELPPRL. A compositionally biased stretch (acidic residues) spans 1294–1304; it reads DELEEDDDEEE.

The protein belongs to the RNA polymerase beta' chain family. RpoC2 subfamily. As to quaternary structure, in cyanobacteria the RNAP catalytic core is composed of 2 alpha, 1 beta, 1 beta', 1 gamma and 1 omega subunit. When a sigma factor is associated with the core the holoenzyme is formed, which can initiate transcription. Zn(2+) is required as a cofactor.

The catalysed reaction is RNA(n) + a ribonucleoside 5'-triphosphate = RNA(n+1) + diphosphate. Its function is as follows. DNA-dependent RNA polymerase catalyzes the transcription of DNA into RNA using the four ribonucleoside triphosphates as substrates. The chain is DNA-directed RNA polymerase subunit beta' from Synechococcus sp. (strain JA-2-3B'a(2-13)) (Cyanobacteria bacterium Yellowstone B-Prime).